Here is a 65-residue protein sequence, read N- to C-terminus: Large ribosomal subunit protein bL35 (65 aa).

Residues 1–15 are compositionally biased toward basic residues; it reads MPKMKTKKSAAKRFQ. The disordered stretch occupies residues 1–26; it reads MPKMKTKKSAAKRFQVRGSGSIKRGQ.

This sequence belongs to the bacterial ribosomal protein bL35 family.

The polypeptide is Large ribosomal subunit protein bL35 (Bordetella avium (strain 197N)).